Consider the following 709-residue polypeptide: Threonine--tRNA ligase, mitochondrial 1 (709 aa).

Residues 1-21 (MLLRLTARSIRRFTTSSSSLP) constitute a mitochondrion transit peptide. Residues 73–135 (DPIKVTLPDG…EGDCKLELFK (63 aa)) enclose the TGS domain. Zn(2+)-binding residues include Cys-407, His-458, and His-584.

This sequence belongs to the class-II aminoacyl-tRNA synthetase family.

It localises to the mitochondrion. It is found in the cytoplasm. The protein resides in the cytosol. The enzyme catalyses tRNA(Thr) + L-threonine + ATP = L-threonyl-tRNA(Thr) + AMP + diphosphate + H(+). The chain is Threonine--tRNA ligase, mitochondrial 1 from Arabidopsis thaliana (Mouse-ear cress).